A 524-amino-acid polypeptide reads, in one-letter code: Bifunctional methyltransferase (524 aa).

The segment at Met1–Pro306 is hemK. Residues Met1–Asn308 form an RF MTase region. S-adenosyl-L-methionine contacts are provided by residues Gly146 to Gly150, Asp169, Trp198, Asn213, Glu353, Glu378, Asn405, and Asp427. Asn213–Tyr216 provides a ligand contact to substrate. The tract at residues Ile307–His524 is tRNA (guanine-N(7)-)-methyltransferase. The tRNA MTase stretch occupies residues Arg311–His524. Residue Asp427 is part of the active site. Substrate-binding residues include Lys431 and Asp463.

This sequence in the C-terminal section; belongs to the class I-like SAM-binding methyltransferase superfamily. TrmB family. The protein in the N-terminal section; belongs to the protein N5-glutamine methyltransferase family. PrmC subfamily.

It carries out the reaction L-glutaminyl-[peptide chain release factor] + S-adenosyl-L-methionine = N(5)-methyl-L-glutaminyl-[peptide chain release factor] + S-adenosyl-L-homocysteine + H(+). The catalysed reaction is guanosine(46) in tRNA + S-adenosyl-L-methionine = N(7)-methylguanosine(46) in tRNA + S-adenosyl-L-homocysteine. Its function is as follows. Methylates the class 1 translation termination release factors RF1/PrfA and RF2/PrfB on the glutamine residue of the universally conserved GGQ motif. Catalyzes the formation of N(7)-methylguanine at position 46 (m7G46) in tRNA. The sequence is that of Bifunctional methyltransferase (prmC/trmB) from Rickettsia conorii (strain ATCC VR-613 / Malish 7).